Consider the following 109-residue polypeptide: Aquaporin-2 (109 aa).

Residues S1–R6 lie on the Cytoplasmic side of the membrane. Residues A7–L27 form a helical membrane-spanning segment. At N28–S35 the chain is on the extracellular side. A helical transmembrane segment spans residues V36–L54. Topologically, residues G55 to G59 are cytoplasmic. The segment at residues A60 to A69 is an intramembrane region (discontinuously helical). The NPA 1 motif lies at N63–A65. At C70 to R80 the chain is on the cytoplasmic side. A helical membrane pass occupies residues A81–I102. Residues T103 to R109 are Extracellular-facing.

This sequence belongs to the MIP/aquaporin (TC 1.A.8) family. In terms of assembly, homotetramer. Post-translationally, serine phosphorylation is necessary and sufficient for expression at the apical membrane. Endocytosis is not phosphorylation-dependent. In terms of processing, N-glycosylated.

The protein resides in the apical cell membrane. Its subcellular location is the basolateral cell membrane. It localises to the cell membrane. It is found in the cytoplasmic vesicle membrane. The protein localises to the golgi apparatus. The protein resides in the trans-Golgi network membrane. It catalyses the reaction H2O(in) = H2O(out). The catalysed reaction is glycerol(in) = glycerol(out). Its function is as follows. Forms a water-specific channel that provides the plasma membranes of renal collecting duct with high permeability to water, thereby permitting water to move in the direction of an osmotic gradient. Plays an essential role in renal water homeostasis. Could also be permeable to glycerol. The chain is Aquaporin-2 from Equus caballus (Horse).